Reading from the N-terminus, the 58-residue chain is Small ribosomal subunit protein bS21 (58 aa).

Residues 35-58 are disordered; that stretch reads REHYEKPSVKRKKKSEAARKRKFK. A compositionally biased stretch (basic residues) spans 43–58; it reads VKRKKKSEAARKRKFK.

It belongs to the bacterial ribosomal protein bS21 family.

This chain is Small ribosomal subunit protein bS21, found in Ruminiclostridium cellulolyticum (strain ATCC 35319 / DSM 5812 / JCM 6584 / H10) (Clostridium cellulolyticum).